We begin with the raw amino-acid sequence, 335 residues long: MIQFQRLHKSYSVDGRQIVALHPLDLRIGPGEVFGIIGHSGAGKSTLIRLINRLEEPSGGRLLIGDEDVTALDGQGLRALRRRIGMIFQHFNLLSSRTVAGNVAFPLELAGTPRAEIDARVAELLARVGLQEHANKYPAQLSGGQKQRVGIARALATRPQILLCDEATSALDPQTTASVLQLLAQINRELGLTIVLITHEMDVIRRVCDRVAVLDAGKLVETGPVTEVFLHPKHATTRRFVSEAEHVDEAELHRDFAAVGGRIVRLTFLGNGTYEPVLGRIARETGVDYNILSGRVDRIKDTPYGQLIVALTGGDQNAARAGFVAAGVQVEDLRV.

The ABC transporter domain maps to 2–241; it reads IQFQRLHKSY…PKHATTRRFV (240 aa). Position 38–45 (38–45) interacts with ATP; sequence GHSGAGKS.

It belongs to the ABC transporter superfamily. Methionine importer (TC 3.A.1.24) family. In terms of assembly, the complex is composed of two ATP-binding proteins (MetN), two transmembrane proteins (MetI) and a solute-binding protein (MetQ).

It localises to the cell inner membrane. The catalysed reaction is L-methionine(out) + ATP + H2O = L-methionine(in) + ADP + phosphate + H(+). The enzyme catalyses D-methionine(out) + ATP + H2O = D-methionine(in) + ADP + phosphate + H(+). Part of the ABC transporter complex MetNIQ involved in methionine import. Responsible for energy coupling to the transport system. This is Methionine import ATP-binding protein MetN from Xanthomonas euvesicatoria pv. vesicatoria (strain 85-10) (Xanthomonas campestris pv. vesicatoria).